A 78-amino-acid chain; its full sequence is D-alanyl carrier protein (78 aa).

One can recognise a Carrier domain in the interval 1–78 (MAFRENVLEI…MIITQLEALK (78 aa)). Ser36 carries the post-translational modification O-(pantetheine 4'-phosphoryl)serine.

It belongs to the DltC family. In terms of processing, 4'-phosphopantetheine is transferred from CoA to a specific serine of apo-DCP.

It localises to the cytoplasm. It functions in the pathway cell wall biogenesis; lipoteichoic acid biosynthesis. Carrier protein involved in the D-alanylation of lipoteichoic acid (LTA). The loading of thioester-linked D-alanine onto DltC is catalyzed by D-alanine--D-alanyl carrier protein ligase DltA. The DltC-carried D-alanyl group is further transferred to cell membrane phosphatidylglycerol (PG) by forming an ester bond, probably catalyzed by DltD. D-alanylation of LTA plays an important role in modulating the properties of the cell wall in Gram-positive bacteria, influencing the net charge of the cell wall. This is D-alanyl carrier protein from Listeria innocua serovar 6a (strain ATCC BAA-680 / CLIP 11262).